We begin with the raw amino-acid sequence, 383 residues long: uncharacterized protein (383 aa).

The 326-residue stretch at 58 to 383 (GKGATRTQAR…RVGRRIRSSI (326 aa)) folds into the YcaO domain. The interval 80–100 (AERKPEDETFTAHPEDCDGLD) is disordered.

This is an uncharacterized protein from Methanothermobacter thermautotrophicus (strain ATCC 29096 / DSM 1053 / JCM 10044 / NBRC 100330 / Delta H) (Methanobacterium thermoautotrophicum).